A 639-amino-acid chain; its full sequence is 3-hydroxybenzoate 4-monooxygenase (639 aa).

FAD-binding positions include 34 to 64 (DVLI…IVEQ), glutamine 73, valine 166, asparagine 212, 269 to 271 (RFY), tyrosine 317, aspartate 349, and serine 365.

This sequence belongs to the PheA/TfdB FAD monooxygenase family. Homodimer. FAD serves as cofactor.

The enzyme catalyses 3-hydroxybenzoate + NADPH + O2 + H(+) = 3,4-dihydroxybenzoate + NADP(+) + H2O. In terms of biological role, converts 3-hydroxybenzoate (m-hydroxybenzoate), and to a lesser extent p-hydroxybenzoate, to 3,4-dihydroxybenzoate (protocatechuate). Also acts on a number of analogs of 3-hydroxybenzoate substituted in the 2, 4, 5 and 6 positions. This Comamonas testosteroni (Pseudomonas testosteroni) protein is 3-hydroxybenzoate 4-monooxygenase (mobA).